A 360-amino-acid polypeptide reads, in one-letter code: MLLLLTAYLSKYHTFFTVFNYLSLRAILGVLTALAISLLVGNKVIVLLQRLQIGQAVRSDGPQTHLSKAGTPTMGGALIIFSISVSTLLWGDLRNQYVWVVLLVMLAFGVVGWVDDYRKVVEKNPRGLPGRWKYFWQSVFGLAAAFYLYYTASTPAETALIVPLFKDVAIPLGMFFIVLTYFVIVGTSNAVNLTDGLDGLAILPTVLVGGALGVFAYLTGNIRFADYLLIPYVHGSGELLVFCAALAGAGLGFLWFNTYPAQIFMGDVGSLALGAALGTIAVIVRQELVLFIMGGVFVMETVSVILQVASYKLTKRRIFRMAPIHHHFELKGWAEPKVIVRFWIITVCLVLVGFATLKVR.

Helical transmembrane passes span I27–L47, T73–L93, Y97–Y117, A145–F165, V168–S188, G199–T219, S236–F256, I263–I283, L288–V308, and K337–L357.

The protein belongs to the glycosyltransferase 4 family. MraY subfamily. Mg(2+) serves as cofactor.

Its subcellular location is the cell inner membrane. It catalyses the reaction UDP-N-acetyl-alpha-D-muramoyl-L-alanyl-gamma-D-glutamyl-meso-2,6-diaminopimeloyl-D-alanyl-D-alanine + di-trans,octa-cis-undecaprenyl phosphate = di-trans,octa-cis-undecaprenyl diphospho-N-acetyl-alpha-D-muramoyl-L-alanyl-D-glutamyl-meso-2,6-diaminopimeloyl-D-alanyl-D-alanine + UMP. It functions in the pathway cell wall biogenesis; peptidoglycan biosynthesis. Its function is as follows. Catalyzes the initial step of the lipid cycle reactions in the biosynthesis of the cell wall peptidoglycan: transfers peptidoglycan precursor phospho-MurNAc-pentapeptide from UDP-MurNAc-pentapeptide onto the lipid carrier undecaprenyl phosphate, yielding undecaprenyl-pyrophosphoryl-MurNAc-pentapeptide, known as lipid I. The chain is Phospho-N-acetylmuramoyl-pentapeptide-transferase from Marinomonas sp. (strain MWYL1).